A 167-amino-acid polypeptide reads, in one-letter code: Small ribosomal subunit protein uS5 (167 aa).

Positions 12–75 (LEERVVTINR…EDAKKNMVLV (64 aa)) constitute an S5 DRBM domain.

The protein belongs to the universal ribosomal protein uS5 family. In terms of assembly, part of the 30S ribosomal subunit. Contacts proteins S4 and S8.

With S4 and S12 plays an important role in translational accuracy. In terms of biological role, located at the back of the 30S subunit body where it stabilizes the conformation of the head with respect to the body. This is Small ribosomal subunit protein uS5 from Listeria monocytogenes serotype 4b (strain F2365).